The following is a 224-amino-acid chain: Ribosomal RNA large subunit methyltransferase E (224 aa).

S-adenosyl-L-methionine is bound by residues glycine 60, tryptophan 62, aspartate 93, aspartate 109, and aspartate 137. Lysine 177 acts as the Proton acceptor in catalysis.

This sequence belongs to the class I-like SAM-binding methyltransferase superfamily. RNA methyltransferase RlmE family.

It is found in the cytoplasm. It carries out the reaction uridine(2552) in 23S rRNA + S-adenosyl-L-methionine = 2'-O-methyluridine(2552) in 23S rRNA + S-adenosyl-L-homocysteine + H(+). Specifically methylates the uridine in position 2552 of 23S rRNA at the 2'-O position of the ribose in the fully assembled 50S ribosomal subunit. In Polynucleobacter asymbioticus (strain DSM 18221 / CIP 109841 / QLW-P1DMWA-1) (Polynucleobacter necessarius subsp. asymbioticus), this protein is Ribosomal RNA large subunit methyltransferase E.